Reading from the N-terminus, the 141-residue chain is Large ribosomal subunit protein uL11 (141 aa).

It belongs to the universal ribosomal protein uL11 family. Part of the ribosomal stalk of the 50S ribosomal subunit. Interacts with L10 and the large rRNA to form the base of the stalk. L10 forms an elongated spine to which L12 dimers bind in a sequential fashion forming a multimeric L10(L12)X complex. Post-translationally, one or more lysine residues are methylated.

Forms part of the ribosomal stalk which helps the ribosome interact with GTP-bound translation factors. In Campylobacter concisus (strain 13826), this protein is Large ribosomal subunit protein uL11.